The following is a 496-amino-acid chain: RNA-binding motif protein, Y chromosome, family 1 member E (496 aa).

Residues 8-85 enclose the RRM domain; it reads GKLFIGGLNR…KAIKVEQAKK (78 aa). Disordered stretches follow at residues 67-348 and 453-496; these read DMNG…PHRD and DQRN…SSRY. Composition is skewed to low complexity over residues 97-114 and 149-159; these read PASSRNRSPSGSLRSARG and PVKRGPSSRSG. The segment covering 175–184 has biased composition (polar residues); that stretch reads NSWMGSQGPM. Composition is skewed to basic and acidic residues over residues 204–214, 242–253, 276–289, 313–326, 335–348, and 484–496; these read RNDRMSTRHDG, DNGHSNRDEHSS, AYRDYGHSRRDESY, GYRDYGHSRRHESY, SSRETRDYAPPHRD, and GESRSEKGDSSRY.

As to quaternary structure, interacts with splicing factor proteins SFRS3/SRP20, TRA2B/SFRS10, KHDRBS1/SAM68 and KHDRBS3. In terms of tissue distribution, testis-specific.

The protein localises to the nucleus. RNA-binding protein which may be involved in spermatogenesis. Required for sperm development, possibly by participating in pre-mRNA splicing in the testis. The protein is RNA-binding motif protein, Y chromosome, family 1 member E (RBMY1E) of Homo sapiens (Human).